Here is a 524-residue protein sequence, read N- to C-terminus: Leukotriene-B4 omega-hydroxylase 3 (524 aa).

Residues Glu328 and Cys468 each coordinate heme.

This sequence belongs to the cytochrome P450 family. The cofactor is heme.

It localises to the endoplasmic reticulum membrane. The protein localises to the microsome membrane. It catalyses the reaction leukotriene B4 + reduced [NADPH--hemoprotein reductase] + O2 = 20-hydroxy-leukotriene B4 + oxidized [NADPH--hemoprotein reductase] + H2O + H(+). It participates in lipid metabolism; leukotriene B4 degradation. Cytochromes P450 are a group of heme-thiolate monooxygenases. Catalyzes the omega-hydroxylation of LTB4. The sequence is that of Leukotriene-B4 omega-hydroxylase 3 (Cyp4f14) from Mus musculus (Mouse).